A 115-amino-acid chain; its full sequence is NAD(P)H-quinone oxidoreductase subunit M (115 aa).

It belongs to the complex I NdhM subunit family. In terms of assembly, NDH-1 can be composed of about 15 different subunits; different subcomplexes with different compositions have been identified which probably have different functions.

Its subcellular location is the cellular thylakoid membrane. The catalysed reaction is a plastoquinone + NADH + (n+1) H(+)(in) = a plastoquinol + NAD(+) + n H(+)(out). It catalyses the reaction a plastoquinone + NADPH + (n+1) H(+)(in) = a plastoquinol + NADP(+) + n H(+)(out). Its function is as follows. NDH-1 shuttles electrons from an unknown electron donor, via FMN and iron-sulfur (Fe-S) centers, to quinones in the respiratory and/or the photosynthetic chain. The immediate electron acceptor for the enzyme in this species is believed to be plastoquinone. Couples the redox reaction to proton translocation, and thus conserves the redox energy in a proton gradient. Cyanobacterial NDH-1 also plays a role in inorganic carbon-concentration. This Prochlorococcus marinus (strain MIT 9303) protein is NAD(P)H-quinone oxidoreductase subunit M.